The primary structure comprises 121 residues: Ribosome-binding factor A (121 aa).

Belongs to the RbfA family. In terms of assembly, monomer. Binds 30S ribosomal subunits, but not 50S ribosomal subunits or 70S ribosomes.

Its subcellular location is the cytoplasm. Functionally, one of several proteins that assist in the late maturation steps of the functional core of the 30S ribosomal subunit. Associates with free 30S ribosomal subunits (but not with 30S subunits that are part of 70S ribosomes or polysomes). Required for efficient processing of 16S rRNA. May interact with the 5'-terminal helix region of 16S rRNA. In Clostridium kluyveri (strain NBRC 12016), this protein is Ribosome-binding factor A.